The sequence spans 319 residues: Oligopeptide transport ATP-binding protein OppF (319 aa).

An ABC transporter domain is found at 5–255 (LNLKDLKVYY…PQHIYTKRLL (251 aa)). 48-55 (GESGSGKS) contacts ATP.

Belongs to the ABC transporter superfamily. The complex is composed of two ATP-binding proteins (OppD and OppF), two transmembrane proteins (OppB and OppC) and a solute-binding protein (OppA).

Its subcellular location is the cell membrane. It carries out the reaction a [peptide](out) + ATP + H2O = a [peptide](in) + ADP + phosphate + H(+). Functionally, part of the ABC transporter complex OppABCDF involved in the uptake of oligopeptides. Probably responsible for energy coupling to the transport system. Essential for uptake of peptides larger than three amino acids and for growth in milk. The polypeptide is Oligopeptide transport ATP-binding protein OppF (oppF) (Lactococcus lactis subsp. lactis (strain IL1403) (Streptococcus lactis)).